The chain runs to 74 residues: Conotoxin MiEr93 (74 aa).

The signal sequence occupies residues Met-1 to Ala-22. A propeptide spanning residues Ala-23–Thr-45 is cleaved from the precursor. 3 cysteine pairs are disulfide-bonded: Cys-48–Cys-62, Cys-55–Cys-66, and Cys-61–Cys-73.

This sequence belongs to the conotoxin O1 superfamily. As to expression, expressed by the venom duct.

It localises to the secreted. The protein is Conotoxin MiEr93 of Conus miles (Soldier cone).